The primary structure comprises 3726 residues: Histone-lysine N-methyltransferase trithorax (3726 aa).

Disordered regions lie at residues 1-247 (MGRS…ATTS), 321-352 (QLNS…GVGG), 371-429 (NEVA…TAKQ), and 509-624 (AGAS…RSTR). Low complexity-rich tracts occupy residues 31-53 (PAEP…GSSA) and 71-101 (GGAS…STGS). Residues 102-115 (GSSGSGSTNGGSVN) are compositionally biased toward gly residues. Residues 126 to 143 (LDKEAVTKDQNGDGDKTR) show a composition bias toward basic and acidic residues. Low complexity predominate over residues 147 to 205 (SSAPSGKLSAAASGKALSKSSRTFSASTSVTSSGRSSGSSPDGNSGASSDGASSGISCG). The segment covering 206–215 (KSTAKSTEAS) has biased composition (polar residues). The segment covering 222–247 (TTGAGTCSSAKSSKASSGTTSEATTS) has biased composition (low complexity). 2 stretches are compositionally biased toward low complexity: residues 384–402 (AAAN…GPPA) and 509–525 (AGAS…SSSN). The span at 553–586 (PEDQNNAEDDEMDDDDDDEEAEEDDENEDDNDEA) shows a compositional bias: acidic residues. Positions 587-610 (VSEKSAETEKSAGADERDPDEKQL) are enriched in basic and acidic residues. Residues 759–884 (PSACSICSAV…PGMRGEAAAR (126 aa)) constitute a DNA-binding region (nuclear receptor). 4 disordered regions span residues 915 to 937 (TSVK…PNPL), 981 to 1049 (LTKK…SHGV), 1115 to 1184 (VPSA…SSAK), and 1208 to 1231 (DIAT…KEHR). The segment covering 918–937 (KWKSSGDSTSALTSIKPNPL) has biased composition (polar residues). The segment covering 986-1000 (SKQEKEKVKESEQSE) has biased composition (basic and acidic residues). Residues 1031–1041 (PQTSTTTQPSA) show a composition bias toward low complexity. The segment covering 1123–1132 (SPEKPTHIVT) has biased composition (basic and acidic residues). 2 stretches are compositionally biased toward low complexity: residues 1173–1183 (GTASAAGGSSA) and 1211–1223 (TSSS…NQTQ). PHD-type zinc fingers lie at residues 1266 to 1347 (RALC…CTVC), 1348 to 1393 (YTCN…CLKC), and 1421 to 1482 (GNFC…CARR). Residues 1496-1663 (AVMEEFKASL…SEQFPWFQNE (168 aa)) form the Bromo domain. The tract at residues 1573 to 1592 (FKDQQQQQQQRNANMNKPRV) is disordered. The C2HC pre-PHD-type zinc-finger motif lies at 1734–1774 (TRMCLFCRKSGEGLSGEEARLLYCGHDCWVHTNCAMWSAEV). The segment at 1795 to 1842 (IKCTVCGNRGATVGCNVRSCGEHYHYPCARSIDCAFLTDKSMYCPAHA) adopts a PHD-type 4 zinc-finger fold. One can recognise an FYR N-terminal domain in the interval 1884 to 1941 (RVQFHIGSLEVRQLGAIVPRFSDSYEAVVPINFLCSRLYWSSKEPWKIVEYTVRTTIQ). 7 disordered regions span residues 1991-2019 (GGTD…PQQQ), 2068-2110 (TQAM…WPAS), 2283-2302 (CSPT…QGMT), 2649-2669 (GGGA…LGGT), 2866-2894 (SNLK…IASK), 3029-3096 (QHFS…PTPP), and 3347-3381 (RKEE…IQEP). The segment covering 2074 to 2087 (NQAQNQNQQAGGAN) has biased composition (low complexity). Over residues 3032-3043 (STSSSSSSSNCS) the composition is skewed to low complexity. Positions 3044-3057 (LPTNVVNPMQQQAP) are enriched in polar residues. Residues 3386-3470 (GPHLLYEIQS…EKCSKYTPKY (85 aa)) enclose the FYR C-terminal domain. Residues 3588 to 3704 (DYVGVFRSHI…QGEELTYDYK (117 aa)) form the SET domain. S-adenosyl-L-methionine-binding residues include H3598 and R3600. C3641 bears the S-methylcysteine; by autocatalysis mark. S-adenosyl-L-methionine contacts are provided by residues Y3642 and 3665–3666 (NH). Residues C3668, C3714, C3716, and C3721 each coordinate Zn(2+). One can recognise a Post-SET domain in the interval 3710–3726 (EKIPCSCGSKRCRKYLN).

Belongs to the class V-like SAM-binding methyltransferase superfamily. Histone-lysine methyltransferase family. TRX/MLL subfamily. Interacts (via SET domain) with ash1 (via SET domain). Interacts with Nup98. In terms of tissue distribution, maternal isoforms are expressed in syncytial blastoderm, confined to the ventral region fated to become mesoderm. An additional broad domain of expression arises during cellularization and is quickly resolved into four pair-rule-like stripes in the posterior half of the embryo.

The protein localises to the nucleus. It is found in the chromosome. The catalysed reaction is L-lysyl(9)-[histone H3] + 3 S-adenosyl-L-methionine = N(6),N(6),N(6)-trimethyl-L-lysyl(9)-[histone H3] + 3 S-adenosyl-L-homocysteine + 3 H(+). It carries out the reaction L-cysteinyl-[protein] + S-adenosyl-L-methionine = S-methyl-L-cysteinyl-[protein] + S-adenosyl-L-homocysteine + H(+). In terms of biological role, histone methyltransferase that methylates 'Lys-4' of histone H3 (H3K4me). H3K4me represents a specific tag for epigenetic transcriptional activation. Functions in segment determination through interaction with genes of bithorax (BX-C) and antennapedia (ANT-C) complexes. Acts as an activator of BX-C. Involved in the very early regulation of homeotic genes expressed only in the posterior region of the embryo. Also has auto-methylation activity on Cys-3641. In Drosophila melanogaster (Fruit fly), this protein is Histone-lysine N-methyltransferase trithorax.